Consider the following 200-residue polypeptide: Small ribosomal subunit protein uS4 (200 aa).

The S4 RNA-binding domain maps to 92 to 155 (SRLDAVVYSL…QKLNIIVESV (64 aa)).

It belongs to the universal ribosomal protein uS4 family. In terms of assembly, part of the 30S ribosomal subunit. Contacts protein S5. The interaction surface between S4 and S5 is involved in control of translational fidelity.

One of the primary rRNA binding proteins, it binds directly to 16S rRNA where it nucleates assembly of the body of the 30S subunit. In terms of biological role, with S5 and S12 plays an important role in translational accuracy. The chain is Small ribosomal subunit protein uS4 from Staphylococcus aureus (strain JH9).